A 209-amino-acid chain; its full sequence is V-type ATP synthase subunit D (209 aa).

The protein belongs to the V-ATPase D subunit family.

Produces ATP from ADP in the presence of a proton gradient across the membrane. This Anaeromyxobacter sp. (strain K) protein is V-type ATP synthase subunit D.